A 102-amino-acid polypeptide reads, in one-letter code: RNA-binding protein Hfq (102 aa).

One can recognise a Sm domain in the interval 9–68 (DPFLNALRRERVPVSIYLVNGIKLQGQIESFDQFVILLKNTVSQMVYKHAISTVVPSRPV). A disordered region spans residues 63–102 (VPSRPVSHHSNNAGGGTSSNYHHGSSAQNTSAQQDSEETE). Over residues 70-96 (HHSNNAGGGTSSNYHHGSSAQNTSAQQ) the composition is skewed to polar residues.

This sequence belongs to the Hfq family. In terms of assembly, homohexamer.

Its function is as follows. RNA chaperone that binds small regulatory RNA (sRNAs) and mRNAs to facilitate mRNA translational regulation in response to envelope stress, environmental stress and changes in metabolite concentrations. Also binds with high specificity to tRNAs. This chain is RNA-binding protein Hfq, found in Escherichia fergusonii (strain ATCC 35469 / DSM 13698 / CCUG 18766 / IAM 14443 / JCM 21226 / LMG 7866 / NBRC 102419 / NCTC 12128 / CDC 0568-73).